A 539-amino-acid polypeptide reads, in one-letter code: Probable quinate permease (539 aa).

Topologically, residues 1 to 22 (MSILSMVEDRPTPKEVYNWRIY) are cytoplasmic. A helical membrane pass occupies residues 23–43 (LLAAVASFTSCMIGYDSAFIG). At 44–74 (TTISLDSFKNEFHWDSMSTAKQNLVSANIVS) the chain is on the extracellular side. The helical transmembrane segment at 75-95 (CYQAGAFFGAFFAYPIGHFWG) threads the bilayer. The Cytoplasmic segment spans residues 96 to 97 (RK). Residues 98–118 (WGLMLSALVFTLGAGLMLGAN) form a helical membrane-spanning segment. Residues 119 to 130 (GDRGLGLIYGGR) are Extracellular-facing. The helical transmembrane segment at 131 to 151 (VLAGLGVGAGSNFTPIYISEL) threads the bilayer. Residues 152–159 (APPAIRGR) lie on the Cytoplasmic side of the membrane. The chain crosses the membrane as a helical span at residues 160–180 (LVGVYELGWQVGGLVGFWINY). Topologically, residues 181–193 (GVEQTMAPSHKQW) are extracellular. Residues 194–214 (LIPFAVQLIPAGLLIIGILFV) form a helical membrane-spanning segment. The Cytoplasmic portion of the chain corresponds to 215–285 (KESPRWLFLR…AWTNKRILYR (71 aa)). Residues 286–306 (LFLGSMLFFWQNGSGINAINY) traverse the membrane as a helical segment. At 307–325 (YSPTVFKSIGLKGNSSSLL) the chain is on the extracellular side. The helical transmembrane segment at 326–346 (TTGIFGVVKTVVTIVWLLYLI) threads the bilayer. Residues 347–352 (DHVGRR) lie on the Cytoplasmic side of the membrane. Residues 353-373 (LLLLIGAAGGSICMWIVGAYI) traverse the membrane as a helical segment. Residues 374–387 (KVVDPTHNQSDHLN) are Extracellular-facing. A helical membrane pass occupies residues 388-408 (GGGVAAIFFFYLWTAFYTPSW). The Cytoplasmic portion of the chain corresponds to 409-456 (NGTPWVINSEMFDPNIRSLAQACAAGSNWLWNFLISRFTPQMFAKMDY). The chain crosses the membrane as a helical span at residues 457–477 (GVYFFFASLMLLSIPFVFFLV). Topologically, residues 478–539 (PETKGIPLEN…EQVEDTDRKE (62 aa)) are extracellular.

This sequence belongs to the major facilitator superfamily. Sugar transporter (TC 2.A.1.1) family. As to quaternary structure, interacts with creB. Post-translationally, ubiquitinated. Deubiquitinated by creB, probably to control its activity or amount.

It localises to the cell membrane. Integral membrane transporter that imports quinic acid to be catabolized as a carbon source. This is Probable quinate permease (qutD) from Aspergillus niger (strain ATCC MYA-4892 / CBS 513.88 / FGSC A1513).